The primary structure comprises 92 residues: Small ribosomal subunit protein bS20 (92 aa).

Belongs to the bacterial ribosomal protein bS20 family.

Functionally, binds directly to 16S ribosomal RNA. The polypeptide is Small ribosomal subunit protein bS20 (Rickettsia africae (strain ESF-5)).